The sequence spans 375 residues: Putative monooxygenase Rv1533 (375 aa).

FMN-binding positions include Gln190, Gly195, Gly224, and 243–246 (WCGS).

The protein belongs to the nitronate monooxygenase family. The cofactor is FMN.

This is Putative monooxygenase Rv1533 from Mycobacterium tuberculosis (strain ATCC 25618 / H37Rv).